We begin with the raw amino-acid sequence, 365 residues long: Chorismate synthase (365 aa).

NADP(+) is bound at residue Arg-46. Residues 124 to 126, Gly-284, 299 to 303, and Arg-326 each bind FMN; these read RAS and KPTPS.

This sequence belongs to the chorismate synthase family. FMNH2 serves as cofactor.

It carries out the reaction 5-O-(1-carboxyvinyl)-3-phosphoshikimate = chorismate + phosphate. It participates in metabolic intermediate biosynthesis; chorismate biosynthesis; chorismate from D-erythrose 4-phosphate and phosphoenolpyruvate: step 7/7. Catalyzes the anti-1,4-elimination of the C-3 phosphate and the C-6 proR hydrogen from 5-enolpyruvylshikimate-3-phosphate (EPSP) to yield chorismate, which is the branch point compound that serves as the starting substrate for the three terminal pathways of aromatic amino acid biosynthesis. This reaction introduces a second double bond into the aromatic ring system. The chain is Chorismate synthase from Pyrobaculum neutrophilum (strain DSM 2338 / JCM 9278 / NBRC 100436 / V24Sta) (Thermoproteus neutrophilus).